The chain runs to 118 residues: Large ribosomal subunit protein bL20 (118 aa).

It belongs to the bacterial ribosomal protein bL20 family.

In terms of biological role, binds directly to 23S ribosomal RNA and is necessary for the in vitro assembly process of the 50S ribosomal subunit. It is not involved in the protein synthesizing functions of that subunit. This is Large ribosomal subunit protein bL20 from Cyanothece sp. (strain PCC 7425 / ATCC 29141).